Consider the following 228-residue polypeptide: HTH-type transcriptional repressor RspR (228 aa).

Positions 11-78 constitute an HTH gntR-type domain; that stretch reads QPVNQQIYRI…PQRGSYVNKI (68 aa). The segment at residues 38-57 is a DNA-binding region (H-T-H motif); sequence EKEVSVRFNVSRQPVREAFI.

Functionally, repressor of the rspAB operon. Acts by binding directly to the upstream region of rspA. The sequence is that of HTH-type transcriptional repressor RspR (rspR) from Escherichia coli (strain K12).